The primary structure comprises 273 residues: 2-dehydro-3-deoxyphosphooctonate aldolase (273 aa).

It belongs to the KdsA family.

It is found in the cytoplasm. It catalyses the reaction D-arabinose 5-phosphate + phosphoenolpyruvate + H2O = 3-deoxy-alpha-D-manno-2-octulosonate-8-phosphate + phosphate. The protein operates within carbohydrate biosynthesis; 3-deoxy-D-manno-octulosonate biosynthesis; 3-deoxy-D-manno-octulosonate from D-ribulose 5-phosphate: step 2/3. It participates in bacterial outer membrane biogenesis; lipopolysaccharide biosynthesis. The polypeptide is 2-dehydro-3-deoxyphosphooctonate aldolase (Cyanothece sp. (strain PCC 7425 / ATCC 29141)).